The following is a 6684-amino-acid chain: Replicase polyprotein 1ab (6684 aa).

Residues 2–108 (SSKQFKILVN…DFDLKIARTG (107 aa)) form the CoV Nsp1 globular domain. The CoV Nsp2 N-terminal domain occupies 111 to 349 (AIYVDQYMCG…KSLVACSVKR (239 aa)). The Zn(2+) site is built by C240, C242, C259, and C260. The segment at 240–260 (CPCGSESSGVGDWTGFKTACC) is C4. In terms of domain architecture, CoV Nsp2 middle spans 378–773 (NVGLLFKKTP…CNAARNDIEI (396 aa)). Positions 768-879 (RNDIEIGGIP…VQRMYNKMGG (112 aa)) constitute a CoV Nsp2 C-terminal domain. In terms of domain architecture, Ubiquitin-like 1 spans 882 to 983 (KTVSFSEEVD…DGIMISQYDI (102 aa)). The segment at 989–1032 (EKSEVSASSEEEEVESVEEDPENEIVEASEGAEGTSSQEEVETV) is disordered. The segment covering 997-1015 (SEEEEVESVEEDPENEIVE) has biased composition (acidic residues). The Peptidase C16 1 domain occupies 1055–1299 (PWAAAVDVQE…FKVEKVEQQP (245 aa)). C1093 serves as the catalytic For PL1-PRO activity. A C4-type 1; degenerate zinc finger spans residues 1164–1195 (CGCGEKEIVLERAVFKLTPLKESFNYGVCGDC). Catalysis depends on for PL1-PRO activity residues H1244 and D1257. Residues 1318–1489 (NDDLILPFYK…TIENFFSCSI (172 aa)) enclose the Macro domain. The region spanning 1486–1542 (SCSIPVNVTEDNVNHERVSVSFDKTYGEQLKGTVVIKDKDVTNQLPSAFDVGQKVIK) is the Ubiquitin-like 2 domain. The 254-residue stretch at 1550–1803 (AHYGFRDAAA…KVAASPKIVQ (254 aa)) folds into the Peptidase C16 2 domain. C1588 (for PL2-PRO activity) is an active-site residue. Zn(2+) is bound by residues C1667, C1670, C1694, and H1696. The C4-type 2; atypical zinc-finger motif lies at 1667 to 1696 (CDKCAKVEKFVGPVVAAPLAIHGTDETCVH). Active-site for PL2-PRO activity residues include H1741 and D1754. The helical transmembrane segment at 1896–1916 (LVLLLIAIYNFFYLFVSIPVV) threads the bilayer. The segment at 1896–2053 (LVLLLIAIYN…LALKHIVFAC (158 aa)) is HD1. The 3Ecto domain maps to 1905–1970 (NFFYLFVSIP…LQVTWDFKSD (66 aa)). 2 disulfide bridges follow: C1921/C1948 and C1939/C1945. 2 consecutive transmembrane segments (helical) span residues 1995–2015 (CFLM…FGYV) and 2033–2053 (FVIV…VFAC). Positions 2044 to 2134 (LALKHIVFAC…SVKQTVYATD (91 aa)) are Y1. In terms of domain architecture, CoV Nsp3 Y spans 2044 to 2384 (LALKHIVFAC…PYERFTESVS (341 aa)). The Zn(2+) site is built by H2048, C2053, C2058, C2061, C2094, H2097, C2101, and C2104. The segment at 2048 to 2061 (HIVFACSNPSCKTC) is ZF1. The ZF2 stretch occupies residues 2094 to 2104 (CKKHNFYCKNC). The tract at residues 2135-2224 (RSHQEVTKVE…IVNSDLLEDL (90 aa)) is Y2. The coV-Y stretch occupies residues 2135–2384 (RSHQEVTKVE…PYERFTESVS (250 aa)). A Y3 region spans residues 2225–2281 (SVDFKGALFNAKKNVIKNSFNVDVSECKNLDECYRACNLNVSFSTFEMAVNNAHRFG). Positions 2282–2384 (ILITDRSFNN…PYERFTESVS (103 aa)) are Y4. The next 8 helical transmembrane spans lie at 2401 to 2421 (IVIL…YSVA), 2467 to 2487 (YGFI…VFDL), 2497 to 2517 (PAYV…AFGV), 2538 to 2558 (CVFN…VYCA), 2666 to 2686 (GAML…YGVL), 2695 to 2715 (CTFL…SYFV), 2721 to 2741 (FMII…YPGI), and 2746 to 2766 (FIIA…ILVF). The HD2 stretch occupies residues 2401-2766 (IVILVFVFIF…YVITAYILVF (366 aa)). The Nsp4C domain maps to 2783–2878 (LFEGDKFVGN…PTVSVNSTLQ (96 aa)). The Peptidase C30 domain maps to 2879 to 3180 (SGLRKMAQPS…IRQMYGVNLQ (302 aa)). Residues H2919 and C3022 each act as for 3CL-PRO activity in the active site. The next 8 helical transmembrane spans lie at 3187–3207 (FFYP…EFFM), 3217–3237 (TFVS…VSGI), 3242–3262 (LFFM…NLFW), 3280–3300 (MFLP…IVFV), 3313–3333 (WFSL…IFGT), 3347–3367 (FVNM…VVIA), 3371–3391 (IAYY…FGFM), and 3394–3414 (ISIV…ILYW). The interval 3187–3414 (FFYPIMTAMT…FCCYYGILYW (228 aa)) is HD3. The RdRp Nsp7 cofactor domain maps to 3475–3557 (SKLTEMKCTN…SYFENTTILQ (83 aa)). A RdRp Nsp8 cofactor domain is found at 3558–3752 (SVASAYAALP…ITCERTTKLQ (195 aa)). The 111-residue stretch at 3753–3863 (NNEIMPGKLK…GYIGATVRLQ (111 aa)) folds into the Nsp9 ssRNA-binding domain. Positions 3864–4004 (AGKPTEHPSN…TSMQSFTVDQ (141 aa)) constitute an ExoN/MTase coactivator domain. Zn(2+) contacts are provided by C3937, C3940, H3946, C3953, C3979, C3982, C3990, and C3992. 2 zinc fingers span residues 3937 to 3953 (CIYC…DGLC) and 3979 to 3992 (CVVC…GCMC). The 250-residue stretch at 4006–4255 (YLNRVRGSSA…ESENFVKSDI (250 aa)) folds into the NiRAN domain. The Nsp12 Interface domain maps to 4261-4359 (KQYDLLAYDF…WNLDVKLDTM (99 aa)). Residues H4290, C4296, C4301, C4305, and C4482 each contribute to the Zn(2+) site. A Nsp12 RNA-dependent RNA polymerase domain is found at 4360 to 4927 (KLSMTDLLRF…SLYEKSTVLQ (568 aa)). Residues 4362–4576 (SMTDLLRFVT…HQKHLKSIAA (215 aa)) are rdRp Fingers N-ter. The interval 4577-4615 (TRNATVVIGSTKFYGGWDNMLKNLMRDVDNGCLMGWDYP) is rdRp Palm N-ter. In terms of domain architecture, RdRp catalytic spans 4607–4769 (GCLMGWDYPK…CYNKDYADLG (163 aa)). The tract at residues 4616–4674 (KCDRALPNMIRMASAMILGSKHVGCCTHNDRFYRLSNELAQVLTEVVHCTGGFYFKPGG) is rdRp Fingers C-ter. Zn(2+) contacts are provided by H4637, C4640, and C4641. Residues 4675 to 4810 (TTSGDGTTAY…SVGPHEFCSQ (136 aa)) form a rdRp Palm C-ter region. Active-site residues include S4754, D4755, and D4756. Residues 4811 to 4927 (HTLQIVGPDG…SLYEKSTVLQ (117 aa)) are rdRp Thumb. Residues 4928-5040 (AAGMCVVCGS…EDFNKLAVSD (113 aa)) form the CV ZBD domain. Residues C4932, C4935, C4943, C4946, C4953, C4956, H4960, H4966, C4977, C4982, C4999, and H5002 each coordinate Zn(2+). A (+)RNA virus helicase ATP-binding domain is found at 5175–5366 (NTISKLYPVF…MCTLGPDVFL (192 aa)). 5210 to 5217 (GPPGSGKS) is an ATP binding site. One can recognise a (+)RNA virus helicase C-terminal domain in the interval 5367–5536 (HKCYRCPAEI…AKPETCGLFK (170 aa)). One can recognise an ExoN domain in the interval 5598–5812 (LFCTRDFAMR…RCLAIHDCFV (215 aa)). Catalysis depends on residues D5616, E5618, and E5717. Residues C5733, C5735, C5751, H5754, H5782, C5786, and H5789 each coordinate Zn(2+). Residues H5793 and D5798 contribute to the active site. Zn(2+) is bound at residue C5804. One can recognise an N7-MTase domain in the interval 5821 to 6042 (YPFIDNEEKI…MLWHGFVNSK (222 aa)). Residue 5856–5862 (DVGNPKG) participates in S-adenosyl-L-methionine binding. Residues 5933–5947 (CNGGALYVNNHAFHT) are gpppA-binding. Zn(2+) contacts are provided by C5971, C5988, C5999, and H6002. Positions 6046 to 6106 (SLENVAFNVV…NVAFELYAKR (61 aa)) constitute a Nsp15 N-terminal oligomerization domain. The 118-residue stretch at 6107 to 6224 (KLGLTPPLTI…IYVRKNGEYV (118 aa)) folds into the AV-Nsp11N/CoV-Nsp15M domain. A NendoU domain is found at 6241-6381 (KPRSTMEEDF…ENSHIKTFYP (141 aa)). Active-site residues include H6271, H6286, K6327, K6429, D6513, K6553, and E6586. The region spanning 6385–6681 (SAEWNPGYSM…KLLNFGNHFV (297 aa)) is the Nidovirus-type SAM-dependent 2'-O-MTase domain.

This sequence belongs to the coronaviruses polyprotein 1ab family. As to quaternary structure, 3CL-PRO exists as monomer and homodimer. Eight copies of nsp7 and eight copies of nsp8 assemble to form a heterohexadecamer. Nsp9 is a dimer. Nsp10 forms a dodecamer. Mn(2+) serves as cofactor. Specific enzymatic cleavages in vivo by its own proteases yield mature proteins. 3CL-PRO is autocatalytically processed.

It is found in the host membrane. The protein resides in the host cytoplasm. It localises to the host perinuclear region. Its subcellular location is the host endoplasmic reticulum-Golgi intermediate compartment. The catalysed reaction is Thiol-dependent hydrolysis of ester, thioester, amide, peptide and isopeptide bonds formed by the C-terminal Gly of ubiquitin (a 76-residue protein attached to proteins as an intracellular targeting signal).. The enzyme catalyses RNA(n) + a ribonucleoside 5'-triphosphate = RNA(n+1) + diphosphate. It carries out the reaction ATP + H2O = ADP + phosphate + H(+). It catalyses the reaction a 5'-end diphospho-ribonucleoside in mRNA + GTP + H(+) = a 5'-end (5'-triphosphoguanosine)-ribonucleoside in mRNA + diphosphate. The catalysed reaction is a 5'-end (N(7)-methyl 5'-triphosphoguanosine)-ribonucleoside in mRNA + S-adenosyl-L-methionine = a 5'-end (N(7)-methyl 5'-triphosphoguanosine)-(2'-O-methyl-ribonucleoside) in mRNA + S-adenosyl-L-homocysteine + H(+). The enzyme catalyses uridylyl-uridylyl-ribonucleotide-RNA = a 3'-end uridylyl-2',3'-cyclophospho-uridine-RNA + a 5'-end dephospho-ribonucleoside-RNA. Its function is as follows. The replicase polyprotein of coronaviruses is a multifunctional protein: it contains the activities necessary for the transcription of negative stranded RNA, leader RNA, subgenomic mRNAs and progeny virion RNA as well as proteinases responsible for the cleavage of the polyprotein into functional products. Non-structural protein 1 inhibits host translation. By suppressing host gene expression, nsp1 facilitates efficient viral gene expression in infected cells and evasion from host immune response. Functionally, the papain-like proteinase 1 (PLP1) and papain-like proteinase 2 (PLP2) are responsible for the cleavages located at the N-terminus of the replicase polyprotein. In addition, PLP2 possesses a deubiquitinating/deISGylating activity and processes both 'Lys-48'- and 'Lys-63'-linked polyubiquitin chains from cellular substrates. PLP2 also antagonizes innate immune induction of type I interferon by blocking the nuclear translocation of host IRF-3. In terms of biological role, responsible for the majority of cleavages as it cleaves the C-terminus of replicase polyprotein at 11 sites. Recognizes substrates containing the core sequence [ILMVF]-Q-|-[SAGC]. Inhibited by the substrate-analog Cbz-Val-Asn-Ser-Thr-Leu-Gln-CMK. Its function is as follows. The helicase which contains a zinc finger structure displays RNA and DNA duplex-unwinding activities with 5' to 3' polarity. ATPase activity is strongly stimulated by poly(U), poly(dT), poly(C), poly(dA), but not by poly(G). The exoribonuclease acts on both ssRNA and dsRNA in a 3' to 5' direction. Functionally, nsp7-nsp8 hexadecamer may possibly confer processivity to the polymerase, maybe by binding to dsRNA or by producing primers utilized by the latter. In terms of biological role, forms a primer, NSP9-pU, which is utilized by the polymerase for the initiation of RNA chains. Interacts with ribosome signal recognition particle RNA (SRP). Together with NSP8, suppress protein integration into the cell membrane, thereby disrupting host immune defenses. Its function is as follows. RNA-directed RNA polymerase that catalyzes the transcription of viral genomic and subgenomic RNAs. Acts in complex with nsp7 and nsp8 to transcribe both the minus and positive strands of genomic RNA. The kinase-like NiRAN domain of NSP12 attaches one or more nucleotides to the amino terminus of NSP9, forming a covalent RNA-protein intermediate that serves as transcription/replication primer. Subgenomic RNAs (sgRNAs) are formed by discontinuous transcription: The polymerase has the ability to pause at transcription-regulating sequences (TRS) and jump to the leader TRS, resulting in a major deletion. This creates a series of subgenomic RNAs that are replicated, transcribed and translated. In addition, Nsp12 is a subunit of the viral RNA capping enzyme that catalyzes the RNA guanylyltransferase reaction for genomic and sub-genomic RNAs. Subsequently, the NiRAN domain transfers RNA to GDP, and forms the core cap structure GpppA-RNA. Plays a role in viral transcription/replication and prevents the simultaneous activation of host cell dsRNA sensors, such as MDA5/IFIH1, OAS, and PKR. Acts by degrading the 5'-polyuridines generated during replication of the poly(A) region of viral genomic and subgenomic RNAs. Catalyzes a two-step reaction in which a 2'3'-cyclic phosphate (2'3'-cP) is first generated by 2'-O transesterification, which is then hydrolyzed to a 3'-phosphate (3'-P). If not degraded, poly(U) RNA would hybridize with poly(A) RNA tails and activate host dsRNA sensors. This chain is Replicase polyprotein 1ab (rep), found in Sus scrofa (Pig).